The chain runs to 593 residues: V-type ATP synthase alpha chain (593 aa).

246–253 (GPFGAGKT) contributes to the ATP binding site.

It belongs to the ATPase alpha/beta chains family.

The enzyme catalyses ATP + H2O + 4 H(+)(in) = ADP + phosphate + 5 H(+)(out). Produces ATP from ADP in the presence of a proton gradient across the membrane. The V-type alpha chain is a catalytic subunit. In Protochlamydia amoebophila (strain UWE25), this protein is V-type ATP synthase alpha chain.